Reading from the N-terminus, the 81-residue chain is Photosystem I iron-sulfur center (81 aa).

4Fe-4S ferredoxin-type domains are found at residues 2-31 (SHTVKIYDTCIGCTQCVRACPTDVLEMVPW) and 39-68 (IASAPRTEDCVGCKRCESACPTDFLSVRVY). Residues cysteine 11, cysteine 14, cysteine 17, cysteine 21, cysteine 48, cysteine 51, cysteine 54, and cysteine 58 each contribute to the [4Fe-4S] cluster site.

The eukaryotic PSI reaction center is composed of at least 11 subunits. [4Fe-4S] cluster is required as a cofactor.

The protein resides in the plastid. Its subcellular location is the chloroplast thylakoid membrane. The catalysed reaction is reduced [plastocyanin] + hnu + oxidized [2Fe-2S]-[ferredoxin] = oxidized [plastocyanin] + reduced [2Fe-2S]-[ferredoxin]. Functionally, apoprotein for the two 4Fe-4S centers FA and FB of photosystem I (PSI); essential for photochemical activity. FB is the terminal electron acceptor of PSI, donating electrons to ferredoxin. The C-terminus interacts with PsaA/B/D and helps assemble the protein into the PSI complex. Required for binding of PsaD and PsaE to PSI. PSI is a plastocyanin/cytochrome c6-ferredoxin oxidoreductase, converting photonic excitation into a charge separation, which transfers an electron from the donor P700 chlorophyll pair to the spectroscopically characterized acceptors A0, A1, FX, FA and FB in turn. This chain is Photosystem I iron-sulfur center, found in Chlorella vulgaris (Green alga).